The chain runs to 346 residues: Tetraacyldisaccharide 4'-kinase (346 aa).

Position 62 to 69 (62 to 69 (TAGGTGKT)) interacts with ATP.

This sequence belongs to the LpxK family.

It carries out the reaction a lipid A disaccharide + ATP = a lipid IVA + ADP + H(+). It participates in glycolipid biosynthesis; lipid IV(A) biosynthesis; lipid IV(A) from (3R)-3-hydroxytetradecanoyl-[acyl-carrier-protein] and UDP-N-acetyl-alpha-D-glucosamine: step 6/6. Functionally, transfers the gamma-phosphate of ATP to the 4'-position of a tetraacyldisaccharide 1-phosphate intermediate (termed DS-1-P) to form tetraacyldisaccharide 1,4'-bis-phosphate (lipid IVA). The polypeptide is Tetraacyldisaccharide 4'-kinase (Xanthomonas oryzae pv. oryzae (strain MAFF 311018)).